Reading from the N-terminus, the 595-residue chain is Probable Xaa-Pro aminopeptidase CHGG_02942 (595 aa).

The tract at residues Lys51–Val76 is disordered. Low complexity predominate over residues Ser52–Thr66. Asp334, Asp345, Glu541, and Glu563 together coordinate Mn(2+).

The protein belongs to the peptidase M24B family. It depends on Mn(2+) as a cofactor.

It carries out the reaction Release of any N-terminal amino acid, including proline, that is linked to proline, even from a dipeptide or tripeptide.. In terms of biological role, catalyzes the removal of a penultimate prolyl residue from the N-termini of peptides. The sequence is that of Probable Xaa-Pro aminopeptidase CHGG_02942 from Chaetomium globosum (strain ATCC 6205 / CBS 148.51 / DSM 1962 / NBRC 6347 / NRRL 1970) (Soil fungus).